The chain runs to 497 residues: MLNIATDEICSLIRYRIQNYNSELKLNNVGVVFKVGDGIVRVFGLQGAMAGELLLFEEGSVGIAFNLEKNNIGVVLLGDCTLIQEGMIVKGTGKIGEVPVGDKFLGRIVDSLANPIDGKGDIVSSQTRLIEPPAPGIVDRRSVYEPLQTGITAIDAMIPIGRGQRELIIGDRQTGKTAVAIDTILNQKGKDVKCVYVAVGQKSSSIAQVVTTLQDKGALDYTILVSAAADTTATMQYIAPYSGTALAEYFMYNGSHALVVYDDLSKQAQAYREMSLLLRRPPGREAYPGDVFYLHSRLLERAAKLSDSLGGGSLTALPIVETQEGDVSAYIPTNVISITDGQIFLSSDIFNAGFRPAINVGISVSRVGSAAQPKAMKRVAGKLKLELAQFAELEAFSQFASDLDQATQNQLARGKRLREILKQPQYSPLSLENQVGIIFAGTNGYLDKVSIENIPSYITSLTESLKNEKSKFGDVILSTKDFTKDEENVLRNILEAS.

Position 170–177 (170–177 (GDRQTGKT)) interacts with ATP.

Belongs to the ATPase alpha/beta chains family. In terms of assembly, F-type ATPases have 2 components, CF(1) - the catalytic core - and CF(0) - the membrane proton channel. CF(1) has five subunits: alpha(3), beta(3), gamma(1), delta(1), epsilon(1). CF(0) has four main subunits: a, b, b' and c.

Its subcellular location is the plastid. It localises to the chloroplast thylakoid membrane. It carries out the reaction ATP + H2O + 4 H(+)(in) = ADP + phosphate + 5 H(+)(out). Its function is as follows. Produces ATP from ADP in the presence of a proton gradient across the membrane. The alpha chain is a regulatory subunit. The polypeptide is ATP synthase subunit alpha, chloroplastic (Bigelowiella natans (Pedinomonas minutissima)).